Reading from the N-terminus, the 345-residue chain is Mariner Mos1 transposase (345 aa).

A DNA-binding region spans residues 1 to 112 (MSSFVPNKEQ…VSNRLREMGK (112 aa)). 2 DNA-binding regions (H-T-H motif) span residues 24 to 55 (TAAE…RFKS) and 89 to 110 (QKQL…LREM). A linker region spans residues 113–125 (IQKVGRWVPHELN). The tract at residues 126-345 (ERQMERRKNT…CVASDGKYLE (220 aa)) is catalytic. The Mg(2+) site is built by D156, D249, and D284.

In terms of assembly, homodimer. The complex has a trans arrangement, with each transposon end recognized by the DNA binding region of one transposase monomer and by the active site of the other monomer. Requires Mg(2+) as cofactor. Mn(2+) serves as cofactor.

The protein resides in the nucleus. Its function is as follows. Mediates transposition of transposon Mos1 by a 'cut and paste' mechanism. Transposases are sequence-specific nucleases and strand transferases that catalyze transposition through an ordered series of events: sequence-specific binding of transposase to the terminal inverted repeats (IR) present at each end of the transposon, pairing of the transposon IRs in a paired-end complex (PEC), cleavage of one or both DNA strands at each transposon end, capture of target DNA, and strand transfer to insert the transposon at a new site. The polypeptide is Mariner Mos1 transposase (mariner\T) (Drosophila mauritiana (Fruit fly)).